A 198-amino-acid polypeptide reads, in one-letter code: Recombination protein RecR (198 aa).

The C4-type zinc finger occupies 57 to 72; the sequence is CAQCRTLTEHSLCEYC. Positions 80 to 175 constitute a Toprim domain; the sequence is SLLCIVESPA…RTTRIAHGIP (96 aa).

The protein belongs to the RecR family.

Functionally, may play a role in DNA repair. It seems to be involved in an RecBC-independent recombinational process of DNA repair. It may act with RecF and RecO. This is Recombination protein RecR from Methylococcus capsulatus (strain ATCC 33009 / NCIMB 11132 / Bath).